The primary structure comprises 296 residues: Protoheme IX farnesyltransferase (296 aa).

Residues Met-1–Val-9 lie on the Cytoplasmic side of the membrane. Residues Thr-10–Leu-28 traverse the membrane as a helical segment. The Periplasmic segment spans residues Ala-29 to Pro-37. The chain crosses the membrane as a helical span at residues Leu-38–Phe-56. At Asn-57–Lys-78 the chain is on the cytoplasmic side. Residues Gly-79–Gly-97 form a helical membrane-spanning segment. Over Phe-98 to Pro-107 the chain is Periplasmic. Residues Leu-108–Leu-126 traverse the membrane as a helical segment. The Cytoplasmic portion of the chain corresponds to Tyr-127–Pro-197. A helical transmembrane segment spans residues Val-198 to Phe-216. The Periplasmic segment spans residues Ala-217 to Tyr-228. A helical membrane pass occupies residues Ala-229–Met-247. Residues Ala-248–Ser-268 are Cytoplasmic-facing. Residues Ile-269–Asp-287 traverse the membrane as a helical segment. Over Ser-288 to Trp-296 the chain is Periplasmic.

This sequence belongs to the UbiA prenyltransferase family. Protoheme IX farnesyltransferase subfamily.

It is found in the cell inner membrane. The catalysed reaction is heme b + (2E,6E)-farnesyl diphosphate + H2O = Fe(II)-heme o + diphosphate. It functions in the pathway porphyrin-containing compound metabolism; heme O biosynthesis; heme O from protoheme: step 1/1. In terms of biological role, converts heme B (protoheme IX) to heme O by substitution of the vinyl group on carbon 2 of heme B porphyrin ring with a hydroxyethyl farnesyl side group. This is Protoheme IX farnesyltransferase from Shigella flexneri.